We begin with the raw amino-acid sequence, 291 residues long: 4-diphosphocytidyl-2-C-methyl-D-erythritol kinase (291 aa).

The active site involves lysine 8. ATP is bound at residue 89–99; it reads PIGSGIGGGSS. Aspartate 131 is an active-site residue.

The protein belongs to the GHMP kinase family. IspE subfamily.

The catalysed reaction is 4-CDP-2-C-methyl-D-erythritol + ATP = 4-CDP-2-C-methyl-D-erythritol 2-phosphate + ADP + H(+). Its pathway is isoprenoid biosynthesis; isopentenyl diphosphate biosynthesis via DXP pathway; isopentenyl diphosphate from 1-deoxy-D-xylulose 5-phosphate: step 3/6. Its function is as follows. Catalyzes the phosphorylation of the position 2 hydroxy group of 4-diphosphocytidyl-2C-methyl-D-erythritol. This chain is 4-diphosphocytidyl-2-C-methyl-D-erythritol kinase, found in Chlamydia abortus (strain DSM 27085 / S26/3) (Chlamydophila abortus).